The sequence spans 628 residues: Keratin, type II cytoskeletal 3 (628 aa).

The segment at 1 to 21 is disordered; it reads MSRQASKTSGGGSQGFSGRSA. A head region spans residues 1–197; sequence MSRQASKTSG…DPQIGQVKAQ (197 aa). Phosphoserine is present on residues Ser-13 and Ser-56. Residues 198-233 are coil 1A; sequence EREQIKTLNNKFASFIDKVRFLEQQNKVLETKWNLL. The region spanning 198–513 is the IF rod domain; that stretch reads EREQIKTLNN…KLLEGEEYRM (316 aa). The tract at residues 234–254 is linker 1; sequence QQQGTSSISGTNNLEPLFENH. The interval 255-346 is coil 1B; sequence INYLRSYLDN…TLYDAELSQM (92 aa). N6,N6-dimethyllysine is present on Lys-296. The tract at residues 347-370 is linker 12; the sequence is QSHISDTSVVLSMDNNRSLDLDSI. Residue Ser-364 is modified to Phosphoserine. The tract at residues 371–509 is coil 2; the sequence is IAEVRAQYED…ATYRKLLEGE (139 aa). Residues 510-628 are tail; the sequence is EYRMSGECPS…SSQSSQRYSR (119 aa). Positions 605–628 are disordered; sequence SSASNRGGSIKFSQSSQSSQRYSR. Positions 617–628 are enriched in low complexity; that stretch reads SQSSQSSQRYSR.

The protein belongs to the intermediate filament family. As to quaternary structure, heterotetramer of two type I and two type II keratins. Keratin-3 associates with keratin-12. Cornea specific.

This Homo sapiens (Human) protein is Keratin, type II cytoskeletal 3 (KRT3).